A 131-amino-acid polypeptide reads, in one-letter code: Glycine cleavage system H protein (131 aa).

Residues 24-106 (RVTVGISDHA…YGEGWMFVVE (83 aa)) form the Lipoyl-binding domain. N6-lipoyllysine is present on Lys-65.

Belongs to the GcvH family. As to quaternary structure, the glycine cleavage system is composed of four proteins: P, T, L and H. (R)-lipoate serves as cofactor.

Its function is as follows. The glycine cleavage system catalyzes the degradation of glycine. The H protein shuttles the methylamine group of glycine from the P protein to the T protein. This Stenotrophomonas maltophilia (strain K279a) protein is Glycine cleavage system H protein.